Reading from the N-terminus, the 81-residue chain is Large ribosomal subunit protein bL31B (81 aa).

The protein belongs to the bacterial ribosomal protein bL31 family. Type B subfamily. As to quaternary structure, part of the 50S ribosomal subunit.

This Limosilactobacillus fermentum (strain NBRC 3956 / LMG 18251) (Lactobacillus fermentum) protein is Large ribosomal subunit protein bL31B.